Here is a 197-residue protein sequence, read N- to C-terminus: MSKVLFINASPVANEASFSYQLAKTFESEYLKLNPSDQVSWLDLNELDKGSMTLTSKNSKEHFKDENVDPLINQIKSVDKLVVIAPMTNFNYPATLKNWLDKICVANKTFSYKYSKKGGSIGLMDHLKVMIINTQGAPEGWYAFADVTVLLKGVFEFIGAMVDSIKVAGTKVEYLNKQPKEIVEPNLALIKEKAKNF.

FMN contacts are provided by residues S10 and 17–19; that span reads SFS.

This sequence belongs to the azoreductase type 1 family. As to quaternary structure, homodimer. FMN is required as a cofactor.

The enzyme catalyses 2 a quinone + NADH + H(+) = 2 a 1,4-benzosemiquinone + NAD(+). The catalysed reaction is N,N-dimethyl-1,4-phenylenediamine + anthranilate + 2 NAD(+) = 2-(4-dimethylaminophenyl)diazenylbenzoate + 2 NADH + 2 H(+). Its function is as follows. Quinone reductase that provides resistance to thiol-specific stress caused by electrophilic quinones. In terms of biological role, also exhibits azoreductase activity. Catalyzes the reductive cleavage of the azo bond in aromatic azo compounds to the corresponding amines. The chain is FMN-dependent NADH:quinone oxidoreductase from Mycoplasmoides gallisepticum (strain R(low / passage 15 / clone 2)) (Mycoplasma gallisepticum).